The chain runs to 238 residues: MVNLNDAYEIARYIKEVKKKTPVKVYVNTNSLHFQSTDKFKVFGSNGSYIFVGDYEDIMEVLDKHGNDITDTHVEYDRRNSAIPLKNTLSEHARIEPGAIIRDMVTIEKNAVVMMGAVINIGAVIGEGSMVDMNAVIGARGTLGKNVHLGAGAVVAGVLEPPSATPVIVEDDVLIGANAVILEGVRIGKGAVVAAGAVVTTDVEAGAVVAGSPAKVIKMKDEKTADKTKLMEDLRNLD.

This sequence belongs to the transferase hexapeptide repeat family. DapH subfamily.

It catalyses the reaction (S)-2,3,4,5-tetrahydrodipicolinate + acetyl-CoA + H2O = L-2-acetamido-6-oxoheptanedioate + CoA. Its pathway is amino-acid biosynthesis; L-lysine biosynthesis via DAP pathway; LL-2,6-diaminopimelate from (S)-tetrahydrodipicolinate (acetylase route): step 1/3. Its function is as follows. Catalyzes the transfer of an acetyl group from acetyl-CoA to tetrahydrodipicolinate. This chain is 2,3,4,5-tetrahydropyridine-2,6-dicarboxylate N-acetyltransferase, found in Clostridioides difficile (strain 630) (Peptoclostridium difficile).